A 342-amino-acid chain; its full sequence is Ion-translocating oxidoreductase complex subunit D (342 aa).

A run of 3 helical transmembrane segments spans residues 42-62 (GSVI…ALFL), 68-90 (NIAF…LALP), and 124-144 (AMVG…QWLA). The residue at position 171 (threonine 171) is an FMN phosphoryl threonine. The next 5 membrane-spanning stretches (helical) occupy residues 200–220 (FAGL…LYLI), 227–247 (WHIP…AWLI), 252–272 (FADP…FFIA), 286–306 (LVYA…GGYP), and 308–328 (AVAF…YYTQ).

This sequence belongs to the NqrB/RnfD family. The complex is composed of six subunits: RnfA, RnfB, RnfC, RnfD, RnfE and RnfG. FMN is required as a cofactor.

The protein localises to the cell inner membrane. Its function is as follows. Part of a membrane-bound complex that couples electron transfer with translocation of ions across the membrane. This Alcanivorax borkumensis (strain ATCC 700651 / DSM 11573 / NCIMB 13689 / SK2) protein is Ion-translocating oxidoreductase complex subunit D.